The primary structure comprises 2495 residues: Zinc finger protein 462 (2495 aa).

3 consecutive C2H2-type zinc fingers follow at residues 4-27 (LQCD…QDVH), 108-131 (FQCK…RKVH), and 162-185 (FSCQ…KMYH). A Glycyl lysine isopeptide (Lys-Gly) (interchain with G-Cter in SUMO1); alternate cross-link involves residue K20. K20 is covalently cross-linked (Glycyl lysine isopeptide (Lys-Gly) (interchain with G-Cter in SUMO2); alternate). Residues 215–241 (PCKELPAEVVERSILESMVKPLTKSRG) are interaction with PBX1. Glycyl lysine isopeptide (Lys-Gly) (interchain with G-Cter in SUMO2) cross-links involve residues K234 and K271. 3 disordered regions span residues 278-301 (QQEG…NSTY), 329-357 (RPNS…NSGL), and 370-395 (DMTN…DLNE). The segment covering 332-343 (SSSTSKFSSSMS) has biased composition (low complexity). Residues K337, K348, and K350 each participate in a glycyl lysine isopeptide (Lys-Gly) (interchain with G-Cter in SUMO2) cross-link. Phosphoserine is present on residues S351 and S355. Over residues 370 to 387 (DMTNSSADLDTNSMLNDS) the composition is skewed to polar residues. K429 is covalently cross-linked (Glycyl lysine isopeptide (Lys-Gly) (interchain with G-Cter in SUMO2)). C2H2-type zinc fingers lie at residues 440–463 (FQCP…ENIH) and 471–493 (YKCD…KQCH). K485 participates in a covalent cross-link: Glycyl lysine isopeptide (Lys-Gly) (interchain with G-Cter in SUMO2). The disordered stretch occupies residues 492 to 590 (CHTGTSDWDT…PQPPTQAPPL (99 aa)). Residues 493–502 (HTGTSDWDTV) are compositionally biased toward polar residues. Low complexity predominate over residues 503 to 515 (NSQSESLSSSLNE). Over residues 542–590 (PPQPPPPLPPPPPPPSQPLPQPPPPPLQSPHQVPPPTQQPQPPTQAPPL) the composition is skewed to pro residues. The C2H2-type 6 zinc-finger motif lies at 593–616 (YKCTMCSYSTMTLKGLRVHQQHKH). Residues K624, K650, and K661 each participate in a glycyl lysine isopeptide (Lys-Gly) (interchain with G-Cter in SUMO2) cross-link. The interval 629–654 (PSSLPLENETDSHPSSSNTVKKSQTS) is disordered. A compositionally biased stretch (polar residues) spans 641–654 (HPSSSNTVKKSQTS). S681 is subject to Phosphoserine. K699 participates in a covalent cross-link: Glycyl lysine isopeptide (Lys-Gly) (interchain with G-Cter in SUMO2). 3 consecutive C2H2-type zinc fingers follow at residues 835 to 858 (YYCK…QRMH), 878 to 900 (YRCL…YGEH), and 917 to 940 (YRCR…QRMH). K978 is covalently cross-linked (Glycyl lysine isopeptide (Lys-Gly) (interchain with G-Cter in SUMO2)). Residues 980-999 (MATSTPVARGGGLPATFNKN) form a disordered region. Residues 1023–1046 (YDCDVCSFASPNMHSVLVHYQKKH) form a C2H2-type 10 zinc finger. S1083 carries the post-translational modification Phosphoserine. K1128 is covalently cross-linked (Glycyl lysine isopeptide (Lys-Gly) (interchain with G-Cter in SUMO2)). S1159 carries the phosphoserine modification. Glycyl lysine isopeptide (Lys-Gly) (interchain with G-Cter in SUMO2) cross-links involve residues K1196, K1204, K1210, and K1232. C2H2-type zinc fingers lie at residues 1254–1277 (LKCR…KKDH) and 1459–1482 (YQCT…GKKH). K1488 is covalently cross-linked (Glycyl lysine isopeptide (Lys-Gly) (interchain with G-Cter in SUMO2)). A C2H2-type 13 zinc finger spans residues 1504 to 1527 (YKCRHCPYINTRIHGVLTHYQKRH). Residues K1560 and K1580 each participate in a glycyl lysine isopeptide (Lys-Gly) (interchain with G-Cter in SUMO2) cross-link. 3 consecutive C2H2-type zinc fingers follow at residues 1566–1589 (YRCK…EKYH), 1649–1672 (FRCQ…RIKH), and 1686–1709 (FKCA…QKRH). Glycyl lysine isopeptide (Lys-Gly) (interchain with G-Cter in SUMO2) cross-links involve residues K1687 and K1769. A C2H2-type 17 zinc finger spans residues 1881–1903 (FQCKHCDSKLQSIAELTSHLNIH). K1935 is covalently cross-linked (Glycyl lysine isopeptide (Lys-Gly) (interchain with G-Cter in SUMO2)). The C2H2-type 18; degenerate zinc finger occupies 1957–1981 (YKCKFCVEVHPTLRAICNHLRKHVQ). An N6-methyllysine modification is found at K1993. C2H2-type zinc fingers lie at residues 2014–2037 (YSCQ…QTHH), 2043–2066 (FRCK…LKAH), and 2072–2095 (YKCS…LKVH). Residue K2093 forms a Glycyl lysine isopeptide (Lys-Gly) (interchain with G-Cter in SUMO2) linkage. Composition is skewed to polar residues over residues 2112-2121 (SHAHPSSQKA) and 2132-2149 (DSSY…NHYQ). The tract at residues 2112 to 2172 (SHAHPSSQKA…VPPSGTAAGT (61 aa)) is disordered. Phosphoserine is present on residues S2161 and S2166. 3 C2H2-type zinc fingers span residues 2180 to 2203 (LHCE…RDKH), 2209 to 2232 (FKCK…EAGH), and 2243 to 2265 (LRCP…IVLH). K2282 participates in a covalent cross-link: Glycyl lysine isopeptide (Lys-Gly) (interchain with G-Cter in SUMO2). 2 C2H2-type zinc fingers span residues 2289–2311 (FRCD…IEKH) and 2317–2340 (YKCQ…RDEH). The segment at 2361–2387 (KEKIESSSSEDEDKDDEMSSKAEDREL) is disordered. Residues 2377–2387 (EMSSKAEDREL) show a composition bias toward basic and acidic residues. The segment at 2403-2425 (FPCEFCGRAFSQGSEWERHVLRH) adopts a C2H2-type 27 zinc-finger fold. Residue K2493 forms a Glycyl lysine isopeptide (Lys-Gly) (interchain with G-Cter in SUMO2) linkage.

In terms of assembly, interacts with PBX1 isoform PBX1b; this interaction prevents PBX1-HOXA9 heterodimer from forming and binding to DNA. Expressed in the cerebral cortex (at protein level). Expressed in embryonic stem cells (at protein level). Expressed in heart, liver, kidney, muscle, and female and male genital tracts (at protein level).

The protein localises to the nucleus. Functionally, zinc finger nuclear factor involved in transcription by regulating chromatin structure and organization. Involved in the pluripotency and differentiation of embryonic stem cells by regulating SOX2, POU5F1/OCT4, and NANOG. By binding PBX1, prevents the heterodimerization of PBX1 and HOXA9 and their binding to DNA. Regulates neuronal development and neural cell differentiation. The chain is Zinc finger protein 462 from Mus musculus (Mouse).